The sequence spans 624 residues: Chaperone protein HtpG (624 aa).

Residues methionine 1–arginine 336 form an a; substrate-binding region. The segment at glutamate 337–lysine 552 is b. The interval leucine 553 to serine 624 is c.

The protein belongs to the heat shock protein 90 family. As to quaternary structure, homodimer. Post-translationally, UMPylated on a histidine residue by YdiU under ATP-limited conditions.

The protein localises to the cytoplasm. Its activity is regulated as follows. UMPylation of the chaperone by YdiU negatively regulates its activity, facilitating Salmonella survival under ATP-limited conditions. Its function is as follows. Molecular chaperone. Has ATPase activity. The polypeptide is Chaperone protein HtpG (Salmonella typhimurium (strain LT2 / SGSC1412 / ATCC 700720)).